Reading from the N-terminus, the 354-residue chain is Guanine nucleotide-binding protein G(i) subunit alpha-3 (354 aa).

Gly2 is lipidated: N-myristoyl glycine. Cys3 carries the S-palmitoyl cysteine lipid modification. In terms of domain architecture, G-alpha spans 32-354 (KEVKLLLLGA…KNNLKECGLY (323 aa)). Residues 35 to 48 (KLLLLGAGESGKST) form a G1 motif region. GTP-binding residues include Gly42, Glu43, Ser44, Gly45, Lys46, Ser47, Thr48, Asp150, Ser151, Leu175, Arg176, Thr177, Arg178, Val179, Lys180, Thr181, Val201, Gly203, Asn269, Lys270, Asp272, Leu273, Cys325, Ala326, and Thr327. Residue Ser47 coordinates Mg(2+). The tract at residues 173 to 181 (DVLRTRVKT) is G2 motif. Thr181 is a binding site for Mg(2+). The tract at residues 196–205 (FKMFDVGGQR) is G3 motif. A G4 motif region spans residues 265 to 272 (ILFLNKKD). The interval 324–329 (TCATDT) is G5 motif.

Belongs to the G-alpha family. G(i/o/t/z) subfamily. In terms of assembly, heterotrimeric G proteins are composed of 3 units; alpha, beta and gamma. The alpha subunit contains the guanine nucleotide binding site. GTP binding causes dissociation of the heterotrimer, liberating the individual subunits so that they can interact with downstream effector proteins. Forms a complex with CCDC88A/GIV and EGFR which leads to enhanced EGFR signaling and triggering of cell migration; ligand stimulation is required for recruitment of GNAI3 to the complex. Interacts (inactive GDP-bound form) with CCDC88A/GIV (via GBA motif); the interaction leads to activation of GNAI3. Interacts (inactive GDP-bound form) with CCDC88C/DAPLE (via GBA motif); the interaction leads to activation of GNAI3. Interacts (inactive GDP-bound form) with NUCB1 (via GBA motif) and NUCB2 (via GBA motif); the interaction leads to activation of GNAI3. Interacts (inactive GDP-bound form) with PLCD4 (via GBA motif); the interaction leads to activation of GNAI3. Interacts with INSR; the interaction is probably mediated by CCDC88A/GIV. Interacts with GPSM1. Interacts (GDP-bound form) with GPSM2 (via GoLoco domains). Does not interact with RGS2. Interacts with RGS8 and RGS10; this strongly enhances the intrinsic GTPase activity. Interacts with RGS16; this strongly enhances the intrinsic GTPase activity. Interacts with RGS12. Interacts (via active GTP- or inactive GDP-bound form) with RGS14. Interacts (via active GTP-bound form) with TRPC5 (via ANK repeats) in a homotetrameric ion channel; the interaction is direct and activates the channel activity.

It is found in the cytoplasm. The protein localises to the cell membrane. It localises to the cytoskeleton. The protein resides in the microtubule organizing center. Its subcellular location is the centrosome. Heterotrimeric guanine nucleotide-binding proteins (G proteins) function as transducers downstream of G protein-coupled receptors (GPCRs) in numerous signaling cascades. The alpha chain contains the guanine nucleotide binding site and alternates between an active, GTP-bound state and an inactive, GDP-bound state. Signaling by an activated GPCR promotes GDP release and GTP binding. The alpha subunit has a low GTPase activity that converts bound GTP to GDP, thereby terminating the signal. Both GDP release and GTP hydrolysis are modulated by numerous regulatory proteins. Signaling is mediated via effector proteins, such as adenylate cyclase. Inhibits adenylate cyclase activity, leading to decreased intracellular cAMP levels. Stimulates the activity of receptor-regulated K(+) channels. The active GTP-bound form prevents the association of RGS14 with centrosomes and is required for the translocation of RGS14 from the cytoplasm to the plasma membrane. May play a role in cell division. The active GTP-bound form activates the calcium permeant TRPC5 ion channels. This chain is Guanine nucleotide-binding protein G(i) subunit alpha-3 (GNAI3), found in Cricetulus griseus (Chinese hamster).